A 95-amino-acid chain; its full sequence is MLFLKEEKDGVLLKVRVQPRAARNQVAGLYEDALKIRLTAPPVDGEANEACRAFLADSLSLPPSKVEIVSGHASRTKVVKIAGVGAEKVRRAFGL.

The protein belongs to the UPF0235 family.

The protein is UPF0235 protein PTH_1821 of Pelotomaculum thermopropionicum (strain DSM 13744 / JCM 10971 / SI).